Here is a 125-residue protein sequence, read N- to C-terminus: Photosystem II extrinsic protein U (125 aa).

Residues 1 to 29 (MKRLLSWLTGLVVMAGLLFSLATPSGVQA) form the signal peptide.

The protein belongs to the PsbU family. As to quaternary structure, PSII is composed of 1 copy each of membrane proteins PsbA, PsbB, PsbC, PsbD, PsbE, PsbF, PsbH, PsbI, PsbJ, PsbK, PsbL, PsbM, PsbT, PsbX, PsbY, PsbZ, Psb30/Ycf12, peripheral proteins PsbO, CyanoQ (PsbQ), PsbU, PsbV and a large number of cofactors. It forms dimeric complexes.

The protein resides in the cellular thylakoid membrane. One of the extrinsic, lumenal subunits of photosystem II (PSII). PSII is a light-driven water plastoquinone oxidoreductase, using light energy to abstract electrons from H(2)O, generating a proton gradient subsequently used for ATP formation. The extrinsic proteins stabilize the structure of photosystem II oxygen-evolving complex (OEC), the ion environment of oxygen evolution and protect the OEC against heat-induced inactivation. In Synechococcus sp. (strain WH7803), this protein is Photosystem II extrinsic protein U.